Here is a 65-residue protein sequence, read N- to C-terminus: MPTITVSSTSSLCGQALSGNPTFAEHLVRMGITSVSVHSGAIAATPGSVAAAERRLLLESARGDA.

This is an uncharacterized protein from Mycobacterium tuberculosis (strain ATCC 25618 / H37Rv).